We begin with the raw amino-acid sequence, 67 residues long: ATP synthase F(0) complex subunit 8 (67 aa).

A helical membrane pass occupies residues 8 to 24 (TWLIMISSMILTLFITF). The residue at position 54 (K54) is an N6-acetyllysine; alternate. K54 carries the post-translational modification N6-succinyllysine; alternate. Residue K57 is modified to N6-acetyllysine.

This sequence belongs to the ATPase protein 8 family. In terms of assembly, component of the ATP synthase complex composed at least of ATP5F1A/subunit alpha, ATP5F1B/subunit beta, ATP5MC1/subunit c (homooctomer), MT-ATP6/subunit a, MT-ATP8/subunit 8, ATP5ME/subunit e, ATP5MF/subunit f, ATP5MG/subunit g, ATP5MK/subunit k, ATP5MJ/subunit j, ATP5F1C/subunit gamma, ATP5F1D/subunit delta, ATP5F1E/subunit epsilon, ATP5PF/subunit F6, ATP5PB/subunit b, ATP5PD/subunit d, ATP5PO/subunit OSCP. ATP synthase complex consists of a soluble F(1) head domain (subunits alpha(3) and beta(3)) - the catalytic core - and a membrane F(0) domain - the membrane proton channel (subunits c, a, 8, e, f, g, k and j). These two domains are linked by a central stalk (subunits gamma, delta, and epsilon) rotating inside the F1 region and a stationary peripheral stalk (subunits F6, b, d, and OSCP). Interacts with PRICKLE3.

The protein resides in the mitochondrion membrane. Functionally, subunit 8, of the mitochondrial membrane ATP synthase complex (F(1)F(0) ATP synthase or Complex V) that produces ATP from ADP in the presence of a proton gradient across the membrane which is generated by electron transport complexes of the respiratory chain. ATP synthase complex consist of a soluble F(1) head domain - the catalytic core - and a membrane F(1) domain - the membrane proton channel. These two domains are linked by a central stalk rotating inside the F(1) region and a stationary peripheral stalk. During catalysis, ATP synthesis in the catalytic domain of F(1) is coupled via a rotary mechanism of the central stalk subunits to proton translocation. In vivo, can only synthesize ATP although its ATP hydrolase activity can be activated artificially in vitro. Part of the complex F(0) domain. In Halichoerus grypus (Gray seal), this protein is ATP synthase F(0) complex subunit 8.